Here is a 295-residue protein sequence, read N- to C-terminus: Probable alpha-L-glutamate ligase 1 (295 aa).

Residues 104-287 enclose the ATP-grasp domain; the sequence is MQLLSRKGIG…VANAIIEFIE (184 aa). Residues Lys-141, 178–179, Asp-187, and 211–213 each bind ATP; these read EY and RSN. Mg(2+)-binding residues include Asp-248, Glu-260, and Asn-262. Residues Asp-248, Glu-260, and Asn-262 each coordinate Mn(2+).

It belongs to the RimK family. Mg(2+) serves as cofactor. Requires Mn(2+) as cofactor.

In Shewanella denitrificans (strain OS217 / ATCC BAA-1090 / DSM 15013), this protein is Probable alpha-L-glutamate ligase 1.